Here is a 368-residue protein sequence, read N- to C-terminus: Lipoyl synthase, chloroplastic (368 aa).

Disordered regions lie at residues 1-30 and 42-61; these read MQSSLARPLRPPVLAGCGGRRGHGAPRGSV and PTVGTASRAPAGPYTGRDPE. The [4Fe-4S] cluster site is built by Cys-94, Cys-99, Cys-105, Cys-131, Cys-135, Cys-138, and Ser-346. Residues 114–335 enclose the Radical SAM core domain; that stretch reads GEGDGIATAT…KEYGESVGFR (222 aa).

It belongs to the radical SAM superfamily. Lipoyl synthase family. Requires [4Fe-4S] cluster as cofactor.

Its subcellular location is the plastid. The protein resides in the chloroplast. The catalysed reaction is [[Fe-S] cluster scaffold protein carrying a second [4Fe-4S](2+) cluster] + N(6)-octanoyl-L-lysyl-[protein] + 2 oxidized [2Fe-2S]-[ferredoxin] + 2 S-adenosyl-L-methionine + 4 H(+) = [[Fe-S] cluster scaffold protein] + N(6)-[(R)-dihydrolipoyl]-L-lysyl-[protein] + 4 Fe(3+) + 2 hydrogen sulfide + 2 5'-deoxyadenosine + 2 L-methionine + 2 reduced [2Fe-2S]-[ferredoxin]. It functions in the pathway protein modification; protein lipoylation via endogenous pathway; protein N(6)-(lipoyl)lysine from octanoyl-[acyl-carrier-protein]: step 2/2. Functionally, catalyzes the radical-mediated insertion of two sulfur atoms into the C-6 and C-8 positions of the octanoyl moiety bound to the lipoyl domains of lipoate-dependent enzymes, thereby converting the octanoylated domains into lipoylated derivatives. The polypeptide is Lipoyl synthase, chloroplastic (Sorghum bicolor (Sorghum)).